We begin with the raw amino-acid sequence, 179 residues long: Large ribosomal subunit protein uL6 (179 aa).

This sequence belongs to the universal ribosomal protein uL6 family. As to quaternary structure, part of the 50S ribosomal subunit.

Functionally, this protein binds to the 23S rRNA, and is important in its secondary structure. It is located near the subunit interface in the base of the L7/L12 stalk, and near the tRNA binding site of the peptidyltransferase center. The sequence is that of Large ribosomal subunit protein uL6 from Synechocystis sp. (strain ATCC 27184 / PCC 6803 / Kazusa).